A 325-amino-acid polypeptide reads, in one-letter code: Protease HtpX homolog (325 aa).

A helical transmembrane segment spans residues 20-40; it reads IGYLLGGGGGMMIALVIAVAM. Position 130 (H130) interacts with Zn(2+). Residue E131 is part of the active site. Zn(2+) is bound at residue H134. Helical transmembrane passes span 145–165 and 173–193; these read IVATLAGAISMLGNFAFFLGG and VMGVVGTLLAMIVAPFGAMIV. A Zn(2+)-binding site is contributed by E202. The segment at 286-325 is disordered; it reads SAAMTARAAAPSQNSGPWGQRSDNAGGNSNGGSRYRGPWS. Positions 306 to 325 are enriched in low complexity; that stretch reads RSDNAGGNSNGGSRYRGPWS.

Belongs to the peptidase M48B family. Zn(2+) serves as cofactor.

The protein resides in the cell inner membrane. This is Protease HtpX homolog from Brucella melitensis biotype 2 (strain ATCC 23457).